A 547-amino-acid polypeptide reads, in one-letter code: Glucose-6-phosphate isomerase 2 (547 aa).

Residue E351 is the Proton donor of the active site. Active-site residues include H382 and K508.

This sequence belongs to the GPI family.

The protein resides in the cytoplasm. It catalyses the reaction alpha-D-glucose 6-phosphate = beta-D-fructose 6-phosphate. It functions in the pathway carbohydrate biosynthesis; gluconeogenesis. It participates in carbohydrate degradation; glycolysis; D-glyceraldehyde 3-phosphate and glycerone phosphate from D-glucose: step 2/4. Catalyzes the reversible isomerization of glucose-6-phosphate to fructose-6-phosphate. This is Glucose-6-phosphate isomerase 2 from Neisseria gonorrhoeae (strain ATCC 700825 / FA 1090).